The sequence spans 822 residues: Probable RING finger protein 207 homolog (822 aa).

The segment at 8 to 42 adopts an RING-type zinc-finger fold; the sequence is CTICKNEFEEPILLSCQHTTCRKCSTGSPSCKSCS. The B box-type 1; atypical zinc finger occupies 68–115; the sequence is EEMEECANCEQISLPMFYCETCQQSLCLVCRNVTHQARMFSSHKIISS. The Zn(2+) site is built by C73, C76, C97, and H102. The B box-type 2; degenerate zinc finger occupies 122–164; the sequence is YSSSLCKDHNEPYILYCSDVRKLVCIQCFNGRPLEERHSFISI. Coiled coils occupy residues 526-558 and 738-769; these read NSQN…GQSA and DKDE…KVSE.

This is Probable RING finger protein 207 homolog from Caenorhabditis elegans.